We begin with the raw amino-acid sequence, 519 residues long: Glycerophosphoinositol permease 1 (519 aa).

Residues 1 to 32 (MSDLVKSSEVIETTEVPPHNNNNNKRHFKYDS) form a disordered region. Residues 39–59 (LAGGVKLKDALMILCAGFALI) traverse the membrane as a helical segment. Asparagine 93 is a glycosylation site (N-linked (GlcNAc...) asparagine). 3 consecutive transmembrane segments (helical) span residues 94-114 (ASLV…DYIG), 117-137 (WSIV…AASH), and 141-161 (VNGM…GIGA). Residue asparagine 175 is glycosylated (N-linked (GlcNAc...) asparagine). 8 helical membrane passes run 186–206 (ILAT…IFLI), 216–236 (DAIW…VFYF), 273–293 (VAWF…AGII), 313–333 (LLLG…VDIL), 337–357 (YTMM…GCGY), 363–383 (ITGL…FGPG), 404–424 (GISA…FSPI), and 432–452 (WTFI…FIFI). Residues 487–500 (EEEDLEGSSEDSSD) show a composition bias toward acidic residues. Positions 487–519 (EEEDLEGSSEDSSDGEIVKNNTKNDVEKVDALK) are disordered. Asparagine 506 carries N-linked (GlcNAc...) asparagine glycosylation. Residues 508–519 (TKNDVEKVDALK) are compositionally biased toward basic and acidic residues.

The protein belongs to the major facilitator superfamily. Sugar transporter (TC 2.A.1.1) family.

It localises to the cell membrane. It carries out the reaction sn-glycero-3-phospho-1D-myo-inositol(out) = sn-glycero-3-phospho-1D-myo-inositol(in). Glycerophosphodiester transporter that mediates uptake of glycerophosphoinositol (GroPIns) as a source of inositol and phosphate. Does not possess detectable glycerophosphocholine (GroPCho) transport activity. Although no glycerophosphoinositol transport activity occurs in the absence of GIT1, C.albicans is still able to use glycerophosphoinositol as a phosphate source at pH 7.5, albeit slowly. Thus, a second, GIT1-independent, mechanism must exist for utilizing glycerophosphoinositol as a phosphate source at physiological pH. The expanded ability to utilize GroPIns and GroPCho results from the organism's pathogenic nature and its need to occupy a variety of environments within its host organism. This possibility is buttressed by the fact that GroPIns and GroPCho are present and abundant in human fluids. This chain is Glycerophosphoinositol permease 1, found in Candida albicans (strain SC5314 / ATCC MYA-2876) (Yeast).